A 1673-amino-acid polypeptide reads, in one-letter code: Calmodulin-binding transcription activator 1 (1673 aa).

The segment at residues K63–C188 is a DNA-binding region (CG-1). Positions R112–K119 match the Nuclear localization signal motif. The segment at H283–S375 is disordered. Basic and acidic residues predominate over residues E302–H313. Positions H337–N367 are enriched in polar residues. An IPT/TIG domain is found at D875–K953. The segment at M990 to A1021 is disordered. Residues S1003–G1018 are compositionally biased toward gly residues. 3 ANK repeats span residues R1064–D1093, F1109–L1129, and L1143–A1172. 2 disordered regions span residues A1215 to H1246 and A1264 to P1317. Residues R1273 to P1289 are compositionally biased toward polar residues. 3 consecutive IQ domains span residues Q1547–L1576, I1577–L1599, and I1600–I1622.

The protein belongs to the CAMTA family. In terms of assembly, may interact with calmodulin. In terms of tissue distribution, normally expressed in non-neoplastic adult central nervous system tissues: detected in whole brain, cerebellum, brain cortex, occipital lobe, frontal lobe, temporal lobe, putamen. Expression levels are low in oligodendroglial tumors, and are reduced by half in oligodendroglioma and astrocytoma cases with 1p loss of heterozygosity. Detected in neuroblastic-type cultured neuroblastoma cells. Expressed in heart and kidney.

It is found in the nucleus. It localises to the cytoplasm. Functionally, transcriptional activator. The chain is Calmodulin-binding transcription activator 1 from Homo sapiens (Human).